The primary structure comprises 180 residues: Cytokinin-beta-glucosidase 3 (180 aa).

Functionally, hydrolyzes cytokinin glucosides thus liberating free cytokinins. The polypeptide is Cytokinin-beta-glucosidase 3 (ROLC3) (Panax ginseng (Korean ginseng)).